The sequence spans 299 residues: Probable xyloglucan endotransglucosylase/hydrolase protein 10 (299 aa).

The first 29 residues, 1–29 (MTLINRSKPFVLLVGFSIISSLLLWVSQA), serve as a signal peptide directing secretion. The region spanning 30 to 225 (SVVSSGDFNK…WSKGPFVASF (196 aa)) is the GH16 domain. Asparagine 51 carries an N-linked (GlcNAc...) asparagine glycan. Glutamate 111 (nucleophile) is an active-site residue. The active-site Proton donor is glutamate 115. Xyloglucan contacts are provided by residues glutamate 115, 128 to 130 (QTN), 138 to 140 (NRE), 204 to 205 (SW), and glycine 209. Cystine bridges form between cysteine 233–cysteine 242 and cysteine 280–cysteine 294. Residue asparagine 238 is glycosylated (N-linked (GlcNAc...) asparagine). Arginine 285 provides a ligand contact to xyloglucan.

This sequence belongs to the glycosyl hydrolase 16 family. XTH group 1 subfamily. Contains at least one intrachain disulfide bond essential for its enzymatic activity.

The protein localises to the secreted. The protein resides in the cell wall. It localises to the extracellular space. It is found in the apoplast. The enzyme catalyses breaks a beta-(1-&gt;4) bond in the backbone of a xyloglucan and transfers the xyloglucanyl segment on to O-4 of the non-reducing terminal glucose residue of an acceptor, which can be a xyloglucan or an oligosaccharide of xyloglucan.. Its function is as follows. Catalyzes xyloglucan endohydrolysis (XEH) and/or endotransglycosylation (XET). Cleaves and religates xyloglucan polymers, an essential constituent of the primary cell wall, and thereby participates in cell wall construction of growing tissues. This Arabidopsis thaliana (Mouse-ear cress) protein is Probable xyloglucan endotransglucosylase/hydrolase protein 10 (XTH10).